Here is a 272-residue protein sequence, read N- to C-terminus: Undecaprenyl-diphosphatase (272 aa).

The next 7 helical transmembrane spans lie at 6–26 (SLLI…LPVS), 45–65 (AKTF…VMFW), 92–112 (THIL…HDVI), 115–135 (LFYP…LLAA), 189–209 (YAAS…ATVL), 225–245 (MFAV…KTFL), and 251–271 (ISFV…YMVF).

The protein belongs to the UppP family.

It localises to the cell inner membrane. It catalyses the reaction di-trans,octa-cis-undecaprenyl diphosphate + H2O = di-trans,octa-cis-undecaprenyl phosphate + phosphate + H(+). Catalyzes the dephosphorylation of undecaprenyl diphosphate (UPP). Confers resistance to bacitracin. The sequence is that of Undecaprenyl-diphosphatase from Pectobacterium carotovorum subsp. carotovorum (strain PC1).